Consider the following 1088-residue polypeptide: MSQSNSHGQSNLAKFAFNIYGTLSTNSSTPQSHEISPSSSLSSSRSKKQTSQYNTQDTNNNRLSYYCDKEIISLSQLNCSLSIGGYSGDLQHHVVIGGKNYLRLLCVSESQQRIISGINLLESKSIYNSRAPNKLINVNTIKTFADTIATGLSNGVVSIYKISPNGQSKVTGKYSDHNRTINSLDFIESENQLLSGSQDGTIKLWDLRSSSTKPVMTVQANLHSDPIRACQYSPHSAVRNKICVLSVHDSGALCKFDLRTKSGGKVYSPEKKWNLHTGPALSLHIHPEKELVVTGGRDKRISIFNYGERQSRNTPQNLINTYGPVVKVRWSTYTNTEETAEEFEENKQAKPNTLYNYDIACSYLNDDPTITIYNLGRKFIPKQIIHSKKPIQNFIWARNETRSRKIWTISKSSTFSSYNLDRLEDSDVSRPIEDLNNIAMTWNNNNDFCAVSQARYDYDLETYENGINETTEENFDAERNYSLGNEELIHSQANSLTASPVDKPQLTRSLTFNPASSFSTFSPVLVARAATGFLQNDSATSSSSIPNMQVSSSRPKLTRNTSQTTQDSSSSQFASVLPPPSASQTYSSPQYKKNNPPRFMNNPAYVIPVSIPIPANDEYVFRKLSSESLVSTPDGFTLVDVCLLNASVAASVGNNRTSQIWRLLAVSIQEEFESGIEPRRIYAFQPEAINKLPQDVQETSTNANDTLHAETTNSNFVESFKSTSTSGSQFGKQSDKDERKLQSKNSSGNLMDMINKANRTNSFSATSFKFKEQERKEDESQKAQSIKDENERASIHSKSAPISISSHPEDLDDENMGSNNSAALKFSPPSVGVSIPSTRIISSSLASSPKSVRGPSGVKSHISRSRPSPPVQTWLKQKNLEVSNGSAMASTSGLSLTLKRNKTNEEGDQLTKAWKFKSLLRKSLDYATLQGDIIFCSTAALLFYDIVPEIISQFECLEWLGIYIEVLQRKRLFVNAINVIKCATADIQEKLQKLYCQDLSLRFYCSNCQALLVNEKSKFSGKGEFGYWYCDECSKLQSQCVYCNEPCKGLAVTVGLKCGHHGHFGCLKEWFIEDQNTECPGGCGYQII.

The disordered stretch occupies residues N26–Q56. The span at S27–S44 shows a compositional bias: low complexity. WD repeat units follow at residues A131 to V170, D176 to V215, L222 to V266, L275 to T314, D367 to S417, I432 to E473, and D502 to P546. The span at D537 to N560 shows a compositional bias: polar residues. Positions D537–P597 are disordered. Residues T561 to Q572 show a composition bias toward low complexity. Residues A582–K593 are compositionally biased toward polar residues. Residues S631–E671 form a WD 8 repeat. The segment covering A709–K732 has biased composition (polar residues). Disordered regions lie at residues A709–M751, S764–P829, and S844–V871. Residues K769–S794 show a composition bias toward basic and acidic residues. A compositionally biased stretch (polar residues) spans H796 to S806. The segment at C1040–C1083 adopts an RING-type; degenerate zinc-finger fold.

Belongs to the WD repeat RTC1 family.

The protein resides in the vacuole. Its function is as follows. May be involved in a process influencing telomere capping. The polypeptide is Restriction of telomere capping protein 1 (RTC1) (Candida albicans (strain WO-1) (Yeast)).